Consider the following 226-residue polypeptide: ATP synthase F(0) complex subunit a (226 aa).

Transmembrane regions (helical) follow at residues 6-26 (FASFITPVILGLPLVTLIVLF), 68-88 (WALMLMSLILFIGSTNLLGLL), 97-117 (QLSMNLGMAIPLWAGAVITGF), 138-158 (IPMLVIIETISLFIQPVALAV), 164-184 (ITAGHLLIHLIGGATLALMSI), and 189-209 (ALITFTILILLTILEFAVAMI).

The protein belongs to the ATPase A chain family. In terms of assembly, component of the ATP synthase complex composed at least of ATP5F1A/subunit alpha, ATP5F1B/subunit beta, ATP5MC1/subunit c (homooctomer), MT-ATP6/subunit a, MT-ATP8/subunit 8, ATP5ME/subunit e, ATP5MF/subunit f, ATP5MG/subunit g, ATP5MK/subunit k, ATP5MJ/subunit j, ATP5F1C/subunit gamma, ATP5F1D/subunit delta, ATP5F1E/subunit epsilon, ATP5PF/subunit F6, ATP5PB/subunit b, ATP5PD/subunit d, ATP5PO/subunit OSCP. ATP synthase complex consists of a soluble F(1) head domain (subunits alpha(3) and beta(3)) - the catalytic core - and a membrane F(0) domain - the membrane proton channel (subunits c, a, 8, e, f, g, k and j). These two domains are linked by a central stalk (subunits gamma, delta, and epsilon) rotating inside the F1 region and a stationary peripheral stalk (subunits F6, b, d, and OSCP). Interacts with DNAJC30; interaction is direct.

Its subcellular location is the mitochondrion inner membrane. It carries out the reaction H(+)(in) = H(+)(out). In terms of biological role, subunit a, of the mitochondrial membrane ATP synthase complex (F(1)F(0) ATP synthase or Complex V) that produces ATP from ADP in the presence of a proton gradient across the membrane which is generated by electron transport complexes of the respiratory chain. ATP synthase complex consist of a soluble F(1) head domain - the catalytic core - and a membrane F(1) domain - the membrane proton channel. These two domains are linked by a central stalk rotating inside the F(1) region and a stationary peripheral stalk. During catalysis, ATP synthesis in the catalytic domain of F(1) is coupled via a rotary mechanism of the central stalk subunits to proton translocation. With the subunit c (ATP5MC1), forms the proton-conducting channel in the F(0) domain, that contains two crucial half-channels (inlet and outlet) that facilitate proton movement from the mitochondrial intermembrane space (IMS) into the matrix. Protons are taken up via the inlet half-channel and released through the outlet half-channel, following a Grotthuss mechanism. The chain is ATP synthase F(0) complex subunit a from Bos indicus (Zebu).